The primary structure comprises 342 residues: Mitochondrial fission factor (342 aa).

The Cytoplasmic portion of the chain corresponds to 1 to 322 (MSKGTSSDTS…ENKERAKREM (322 aa)). At threonine 115 the chain carries Phosphothreonine. Alanine 146 bears the Phosphoserine mark. The residue at position 149 (arginine 149) is a Phosphothreonine. Lysine 151, serine 155, serine 157, and serine 172 each carry phosphoserine. Position 200 is a phosphothreonine (threonine 200). Residues serine 202, serine 229, serine 233, and serine 295 each carry the phosphoserine modification. The stretch at 291-322 (VDAASLRRQIIKLNRRLQLLEEENKERAKREM) forms a coiled coil. The chain crosses the membrane as a helical; Anchor for type IV membrane protein span at residues 323-340 (VMYSITVAFWLLNSWLWF). Residues 341–342 (RR) lie on the Mitochondrial intermembrane side of the membrane.

The protein belongs to the Tango11 family. As to quaternary structure, homodimer. Interacts with DNM1L. Interacts with C11orf65/MFI; the interaction inhibits MFF interaction with DNM1L. As to expression, highly expressed in heart, kidney, liver, brain, muscle, and stomach.

It localises to the mitochondrion outer membrane. The protein resides in the peroxisome. The protein localises to the cytoplasmic vesicle. It is found in the secretory vesicle. Its subcellular location is the synaptic vesicle. Functionally, plays a role in mitochondrial and peroxisomal fission. Promotes the recruitment and association of the fission mediator dynamin-related protein 1 (DNM1L) to the mitochondrial surface. May be involved in regulation of synaptic vesicle membrane dynamics by recruitment of DNM1L to clathrin-containing vesicles. The chain is Mitochondrial fission factor (MFF) from Homo sapiens (Human).